Here is a 27-residue protein sequence, read N- to C-terminus: Caerulein precursor fragment R8 (27 aa).

In terms of tissue distribution, expressed by the skin glands.

It is found in the secreted. In terms of biological role, antimicrobial peptide. The sequence is that of Caerulein precursor fragment R8 from Xenopus ruwenzoriensis (Uganda clawed frog).